The chain runs to 118 residues: Large ribosomal subunit protein uL18 (118 aa).

The protein belongs to the universal ribosomal protein uL18 family. Part of the 50S ribosomal subunit; part of the 5S rRNA/L5/L18/L25 subcomplex. Contacts the 5S and 23S rRNAs.

In terms of biological role, this is one of the proteins that bind and probably mediate the attachment of the 5S RNA into the large ribosomal subunit, where it forms part of the central protuberance. This Mycoplasmopsis pulmonis (strain UAB CTIP) (Mycoplasma pulmonis) protein is Large ribosomal subunit protein uL18.